The following is a 504-amino-acid chain: Maturase K (504 aa).

The protein belongs to the intron maturase 2 family. MatK subfamily.

Its subcellular location is the plastid. It is found in the chloroplast. Usually encoded in the trnK tRNA gene intron. Probably assists in splicing its own and other chloroplast group II introns. The chain is Maturase K from Lablab purpureus (Hyacinth bean).